The sequence spans 814 residues: Lon protease 1 (814 aa).

Basic and acidic residues predominate over residues 1-17 (MTDDRDKTNEDPEKIIE). Positions 1–28 (MTDDRDKTNEDPEKIIEADFNPEDPDDA) are disordered. Positions 49–245 (LPIIPLRPRP…KVLVLLKKEL (197 aa)) constitute a Lon N-terminal domain. 398 to 405 (GPPGVGKT) is a binding site for ATP. One can recognise a Lon proteolytic domain in the interval 633 to 814 (EDVPGVVTGL…YRDVYQVAFG (182 aa)). Residues serine 721 and lysine 764 contribute to the active site.

It belongs to the peptidase S16 family. As to quaternary structure, homohexamer. Organized in a ring with a central cavity.

Its subcellular location is the cytoplasm. It carries out the reaction Hydrolysis of proteins in presence of ATP.. Its function is as follows. ATP-dependent serine protease that mediates the selective degradation of mutant and abnormal proteins as well as certain short-lived regulatory proteins. Required for cellular homeostasis and for survival from DNA damage and developmental changes induced by stress. Degrades polypeptides processively to yield small peptide fragments that are 5 to 10 amino acids long. Binds to DNA in a double-stranded, site-specific manner. In Syntrophotalea carbinolica (strain DSM 2380 / NBRC 103641 / GraBd1) (Pelobacter carbinolicus), this protein is Lon protease 1.